The primary structure comprises 218 residues: uncharacterized protein (218 aa).

A run of 7 helical transmembrane segments spans residues 9–29 (LLVIVGIDLILGGDNAVVIAM), 42–62 (AIILGTFIAVAMRIGLTSAAV), 67–87 (IPFLQCAGGIFLLYLGYQLLI), 107–127 (TIVLADLFMSLDNVIAVAGAS), 134–154 (VVIGLCVSVPVIIWGSKLIHI), 159–179 (IPLLIYAGSGLLAYTGGEMIV), and 192–212 (GTVETLLPILTVAFVILASIY).

It belongs to the TerC family.

It localises to the cell membrane. This is an uncharacterized protein from Bacillus subtilis (strain 168).